Here is a 447-residue protein sequence, read N- to C-terminus: Serine/threonine-protein phosphatase 2A 55 kDa regulatory subunit B delta isoform (447 aa).

7 WD repeats span residues 26-65 (AEADIISTVEFNCSGELLATGDKGGRVVIFQREQENKSRP), 91-132 (EIEE…KRVE), 175-213 (AHTYHINSISVNSDHQTYLSADDLRVNLWHLEITDRSFN), 224-264 (ELTE…LCDR), 283-321 (EIISSISDVKFSHSGRYMMTRDYLSVKVWDLNMESRPVE), 338-379 (ENDC…DITL), and 414-447 (DFNKKILHTAWHPTDNIIAVAATNNLYIFQDKVN).

This sequence belongs to the phosphatase 2A regulatory subunit B family. PP2A consists of a common heterodimeric core enzyme, composed of a 36 kDa catalytic subunit (subunit C) and a 65 kDa constant regulatory subunit (PR65 or subunit A), that associates with a variety of regulatory subunits. Proteins that associate with the core dimer include three families of regulatory subunits B (the R2/B/PR55/B55, R3/B''/PR72/PR130/PR59 and R5/B'/B56 families), the 48 kDa variable regulatory subunit, viral proteins, and cell signaling molecules. Interacts with ensa (when phosphorylated at 'Ser-67') and arpp19 (when phosphorylated at 'Ser-67'), leading to inhibit PP2A activity.

The protein localises to the cytoplasm. Functionally, substrate-recognition subunit of protein phosphatase 2A (PP2A) that plays a key role in cell cycle by controlling mitosis entry and exit. The activity of PP2A complexes containing ppp2r2d (PR55-delta) fluctuate during the cell cycle: the activity is high in interphase and low in mitosis. During mitosis, activity of PP2A is inhibited via interaction with phosphorylated ensa and arpp19 inhibitors. PP2A complexes containing ppp2r2d (PR55-delta) also regulate the activity of TGF-beta/Activin/Nodal signaling by restricting receptor activity. Within the PP2A complexes, the B regulatory subunits modulate substrate selectivity and catalytic activity, and may also direct the localization of the catalytic enzyme to a particular subcellular compartment. This Xenopus laevis (African clawed frog) protein is Serine/threonine-protein phosphatase 2A 55 kDa regulatory subunit B delta isoform (ppp2r2d).